The following is a 450-amino-acid chain: Divalent metal cation transporter MntH (450 aa).

11 helical membrane-spanning segments follow: residues 44-64 (LLAFVGPGYLVSVGYMDPGNW), 77-97 (TLLSVILLSNLMAILLQSLAA), 121-141 (FLLWLACEAAIIACDLAEVIG), 152-172 (IPLIGGALIAALDAFLLLLLM), 181-201 (AFVIALLAVIAVCFAVQIVAA), 218-238 (IFTNPEMLYIAIGIIGATVMP), 273-293 (IALMLALFINAAILVVAAATF), 310-330 (LLSPLLGLGIASTLFAIALLA), 366-386 (GIAIIPVIIVTAIYGERGTAD), 387-407 (LLVFSQVVLSMQLPFAVIPLV), and 419-439 (FAISPYVAAIAWIVAGVIVVL).

This sequence belongs to the NRAMP family.

The protein resides in the cell inner membrane. H(+)-stimulated, divalent metal cation uptake system. In Bradyrhizobium diazoefficiens (strain JCM 10833 / BCRC 13528 / IAM 13628 / NBRC 14792 / USDA 110), this protein is Divalent metal cation transporter MntH.